The following is a 245-amino-acid chain: Terpene cyclase ausL (245 aa).

The next 7 helical transmembrane spans lie at 17–37 (ILAI…VNYI), 51–71 (IGIL…WMFP), 76–96 (HWQG…LVTL), 113–133 (IVFI…ALAA), 138–158 (ALGF…GGIA), 170–190 (SYLI…KLCI), and 206–226 (MCWF…FLYF).

This sequence belongs to the paxB family.

It is found in the membrane. Its pathway is secondary metabolite biosynthesis; terpenoid biosynthesis. Terpene cyclase; part of the gene cluster A that mediates the biosynthesis of the fungal meroterpenoid acetoxydehydroaustin. The first step of the pathway is the synthesis of 3,5-dimethylorsellinic acid by the polyketide synthase ausA. 3,5-dimethylorsellinic acid is then prenylated by the polyprenyl transferase ausN. Further epoxidation by the FAD-dependent monooxygenase ausM and cyclization by the probable terpene cyclase ausL lead to the formation of protoaustinoid A. Protoaustinoid A is then oxidized to spiro-lactone preaustinoid A3 by the combined action of the FAD-binding monooxygenases ausB and ausC, and the dioxygenase ausE. Acid-catalyzed keto-rearrangement and ring contraction of the tetraketide portion of preaustinoid A3 by ausJ lead to the formation of preaustinoid A4. The aldo-keto reductase ausK, with the help of ausH, is involved in the next step by transforming preaustinoid A4 into isoaustinone which is in turn hydroxylated by the P450 monooxygenase ausI to form austinolide. The cytochrome P450 monooxygenase ausG then modifies austinolide to austinol. Austinol is further acetylated to austin by the O-acetyltransferase ausP, which spontaneously changes to dehydroaustin. The cytochrome P450 monooxygenase then converts dehydroaustin is into 7-dehydrodehydroaustin. The hydroxylation catalyzed by ausR permits the second O-acetyltransferase ausQ to add an additional acetyl group to the molecule, leading to the formation of acetoxydehydroaustin. Due to genetic rearrangements of the clusters and the subsequent loss of some enzymes, the end product of the Penicillium brasilianum austinoid biosynthesis clusters is acetoxydehydroaustin. The polypeptide is Terpene cyclase ausL (Penicillium brasilianum).